We begin with the raw amino-acid sequence, 507 residues long: Probable cytochrome P450 6a18 (507 aa).

Residue cysteine 451 coordinates heme.

It belongs to the cytochrome P450 family. It depends on heme as a cofactor.

It localises to the endoplasmic reticulum membrane. The protein resides in the microsome membrane. May be involved in the metabolism of insect hormones and in the breakdown of synthetic insecticides. The protein is Probable cytochrome P450 6a18 (Cyp6a18) of Drosophila melanogaster (Fruit fly).